A 417-amino-acid chain; its full sequence is Serpin H1 (417 aa).

Residues 1–17 form the signal peptide; sequence MRSLLLGTLCLLAVALA. Lysine 93 carries the N6-succinyllysine modification. N-linked (GlcNAc...) asparagine glycosylation is found at asparagine 119 and asparagine 124. Serine 140 is subject to Phosphoserine. Lysine 206 bears the N6-acetyllysine mark. An N6-succinyllysine modification is found at lysine 295. At lysine 318 the chain carries N6-acetyllysine. N-linked (GlcNAc...) asparagine glycosylation occurs at asparagine 394. A Prevents secretion from ER motif is present at residues 414-417; the sequence is RDEL.

This sequence belongs to the serpin family.

It localises to the endoplasmic reticulum lumen. Binds specifically to collagen. Could be involved as a chaperone in the biosynthetic pathway of collagen. The protein is Serpin H1 (Serpinh1) of Mus musculus (Mouse).